A 160-amino-acid chain; its full sequence is Ribosomal RNA large subunit methyltransferase H (160 aa).

The S-adenosyl-L-methionine site is built by Leu-76 and Gly-108.

Belongs to the RNA methyltransferase RlmH family. Homodimer.

The protein localises to the cytoplasm. It catalyses the reaction pseudouridine(1915) in 23S rRNA + S-adenosyl-L-methionine = N(3)-methylpseudouridine(1915) in 23S rRNA + S-adenosyl-L-homocysteine + H(+). Its function is as follows. Specifically methylates the pseudouridine at position 1915 (m3Psi1915) in 23S rRNA. The chain is Ribosomal RNA large subunit methyltransferase H from Xanthobacter autotrophicus (strain ATCC BAA-1158 / Py2).